The sequence spans 440 residues: D-serine dehydratase (440 aa).

Lysine 116 is modified (N6-(pyridoxal phosphate)lysine).

The protein belongs to the serine/threonine dehydratase family. DsdA subfamily. As to quaternary structure, monomer. It depends on pyridoxal 5'-phosphate as a cofactor.

The catalysed reaction is D-serine = pyruvate + NH4(+). The sequence is that of D-serine dehydratase from Salmonella schwarzengrund (strain CVM19633).